A 446-amino-acid chain; its full sequence is Baeyer-Villiger oxidase mdpL (446 aa).

It belongs to the AflY oxidoreductase family. NADPH serves as cofactor.

It participates in secondary metabolite biosynthesis. Baeyer-Villiger oxidase; part of the gene cluster that mediates the biosynthesis of monodictyphenone, a prenyl xanthone derivative. The pathway begins with the synthesis of atrochrysone thioester by the polyketide synthase (PKS) mdpG. The atrochrysone carboxyl ACP thioesterase mdpF then breaks the thioester bond and releases the atrochrysone carboxylic acid from mdpG. The atrochrysone carboxylic acid is then converted to atrochrysone which is further transformed into emodin anthrone. The next step is performed by the anthrone oxygenase mdpH that catalyzes the oxidation of emodinanthrone to emodin. Emodin is further modified to yield monodictyphenone via several steps involving mdpB, mdpC mdpJ, mdpK and mdpL. These enzymes with xptA, xptB and xptC are also proposed to be involved in the synthesis of shamixanthone from emodin. Especially, direct reduction of emodin by the short chain dehydrogenase mdpC followed by dehydration catalyzed by the scytalone dehydratase-like protein mdpB gives loss of oxygen and formation of chrysophanol intermediate in two simple steps. The protein is Baeyer-Villiger oxidase mdpL of Emericella nidulans (strain FGSC A4 / ATCC 38163 / CBS 112.46 / NRRL 194 / M139) (Aspergillus nidulans).